A 365-amino-acid polypeptide reads, in one-letter code: Eukaryotic translation initiation factor 3 subunit H (365 aa).

Residues 11 to 160 (VKVDALVVMK…LRAFRLSSKF (150 aa)) form the MPN domain.

Belongs to the eIF-3 subunit H family. Component of the eukaryotic translation initiation factor 3 (eIF-3) complex.

Its subcellular location is the cytoplasm. Component of the eukaryotic translation initiation factor 3 (eIF-3) complex, which is involved in protein synthesis of a specialized repertoire of mRNAs and, together with other initiation factors, stimulates binding of mRNA and methionyl-tRNAi to the 40S ribosome. The eIF-3 complex specifically targets and initiates translation of a subset of mRNAs involved in cell proliferation. This Aspergillus oryzae (strain ATCC 42149 / RIB 40) (Yellow koji mold) protein is Eukaryotic translation initiation factor 3 subunit H.